Reading from the N-terminus, the 111-residue chain is WAP four-disulfide core domain protein 12 (111 aa).

The signal sequence occupies residues 1-23 (MGSSSFLVLMVSLVLVTLVAVEG). Residues 27-74 (GIEKAGVCPADNVRCFKSDPPQCHTDQDCLGERKCCYLHCGFKCVIPV) enclose the WAP domain. Cystine bridges form between Cys-34–Cys-62, Cys-41–Cys-66, Cys-49–Cys-61, and Cys-55–Cys-70. A disordered region spans residues 80-111 (GGNKDEDVSRPYPEPGWEAKCPGSSSTRCPQK). Over residues 102-111 (GSSSTRCPQK) the composition is skewed to polar residues.

Highly expressed in prostate, skin, lung and esophagus. Weakly expressed in skeletal muscle, epididymis, kidney, trachea, salivary gland, testis and seminal vesicle.

The protein localises to the secreted. In terms of biological role, antibacterial protein. Putative acid-stable proteinase inhibitor. The protein is WAP four-disulfide core domain protein 12 (WFDC12) of Homo sapiens (Human).